Reading from the N-terminus, the 142-residue chain is Putative pre-16S rRNA nuclease (142 aa).

It belongs to the YqgF nuclease family.

It is found in the cytoplasm. In terms of biological role, could be a nuclease involved in processing of the 5'-end of pre-16S rRNA. The sequence is that of Putative pre-16S rRNA nuclease from Staphylococcus aureus (strain JH1).